Consider the following 87-residue polypeptide: U15-lycotoxin-Ls1h (87 aa).

An N-terminal signal peptide occupies residues 1-20 (MNSKIFAVLLLLGLLSCVLS). A WAP domain is found at 21 to 66 (DQYCPKSSITACKKMNTRNDCCKDDDCTGGSWCCATPCGNFCKYPT). Disulfide bonds link Cys24/Cys54, Cys32/Cys58, Cys41/Cys53, Cys42/Cys80, and Cys47/Cys62.

Belongs to the venom protein 11 family. 01 (wap-1) subfamily. Contains 5 disulfide bonds. As to expression, expressed by the venom gland.

It localises to the secreted. Its function is as follows. Has antibacterial activity. The polypeptide is U15-lycotoxin-Ls1h (Lycosa singoriensis (Wolf spider)).